We begin with the raw amino-acid sequence, 303 residues long: Recombination-associated protein RdgC (303 aa).

The protein belongs to the RdgC family.

It is found in the cytoplasm. It localises to the nucleoid. Its function is as follows. May be involved in recombination. This Salmonella agona (strain SL483) protein is Recombination-associated protein RdgC.